Here is a 119-residue protein sequence, read N- to C-terminus: UPF0102 protein Sare_1228 (119 aa).

The protein belongs to the UPF0102 family.

In Salinispora arenicola (strain CNS-205), this protein is UPF0102 protein Sare_1228.